We begin with the raw amino-acid sequence, 200 residues long: Recombination protein RecR (200 aa).

Residues 59–74 (CGTCGSLDVTDPCAVC) form a C4-type zinc finger. A Toprim domain is found at 82-177 (RLLCVVEEVG…PVTMLARGVP (96 aa)).

This sequence belongs to the RecR family.

In terms of biological role, may play a role in DNA repair. It seems to be involved in an RecBC-independent recombinational process of DNA repair. It may act with RecF and RecO. The protein is Recombination protein RecR of Caulobacter vibrioides (strain ATCC 19089 / CIP 103742 / CB 15) (Caulobacter crescentus).